A 423-amino-acid polypeptide reads, in one-letter code: Isovaleryl-CoA dehydrogenase, mitochondrial (423 aa).

A mitochondrion-targeting transit peptide spans 1 to 29 (MATATRLLGWRVASWRMRPPPAGFVSQRA). N6-acetyllysine; alternate occurs at positions 55, 64, and 75. K55, K64, and K75 each carry N6-succinyllysine; alternate. Residues 162-171 (LAMSEPNAGS) and 195-197 (WIT) contribute to the FAD site. Residue S171 participates in substrate binding. Position 219-220 (219-220 (SR)) interacts with substrate. An N6-acetyllysine modification is found at K238. K259 is subject to N6-acetyllysine; alternate. K259 carries the N6-succinyllysine; alternate modification. Substrate is bound by residues Y274 and 281 to 284 (DLER). Catalysis depends on E283, which acts as the Proton acceptor. R309 contacts FAD. K315 bears the N6-succinyllysine mark. FAD-binding positions include Q320 and 377–381 (QCFGG). 404–405 (AG) provides a ligand contact to substrate. 406–408 (TSE) lines the FAD pocket.

This sequence belongs to the acyl-CoA dehydrogenase family. As to quaternary structure, homotetramer. FAD is required as a cofactor.

The protein resides in the mitochondrion matrix. It catalyses the reaction 3-methylbutanoyl-CoA + oxidized [electron-transfer flavoprotein] + H(+) = 3-methylbut-2-enoyl-CoA + reduced [electron-transfer flavoprotein]. The catalysed reaction is pentanoyl-CoA + oxidized [electron-transfer flavoprotein] + H(+) = (2E)-pentenoyl-CoA + reduced [electron-transfer flavoprotein]. It carries out the reaction hexanoyl-CoA + oxidized [electron-transfer flavoprotein] + H(+) = (2E)-hexenoyl-CoA + reduced [electron-transfer flavoprotein]. The enzyme catalyses butanoyl-CoA + oxidized [electron-transfer flavoprotein] + H(+) = (2E)-butenoyl-CoA + reduced [electron-transfer flavoprotein]. It functions in the pathway amino-acid degradation; L-leucine degradation; (S)-3-hydroxy-3-methylglutaryl-CoA from 3-isovaleryl-CoA: step 1/3. Functionally, catalyzes the conversion of isovaleryl-CoA/3-methylbutanoyl-CoA to 3-methylbut-2-enoyl-CoA as an intermediate step in the leucine (Leu) catabolic pathway. To a lesser extent, is also able to catalyze the oxidation of other saturated short-chain acyl-CoA thioesters as pentanoyl-CoA, hexenoyl-CoA and butenoyl-CoA. This Pongo abelii (Sumatran orangutan) protein is Isovaleryl-CoA dehydrogenase, mitochondrial (IVD).